Here is an 83-residue protein sequence, read N- to C-terminus: MAKGKANLNLTYEAAIGRLEEVVRSLETGEASLDESLKLFQEGIGLVRHCHSQLDAYEAKVQRLIETPDGAAVVEERRTEEGE.

Belongs to the XseB family. Heterooligomer composed of large and small subunits.

The protein localises to the cytoplasm. It catalyses the reaction Exonucleolytic cleavage in either 5'- to 3'- or 3'- to 5'-direction to yield nucleoside 5'-phosphates.. Its function is as follows. Bidirectionally degrades single-stranded DNA into large acid-insoluble oligonucleotides, which are then degraded further into small acid-soluble oligonucleotides. The protein is Exodeoxyribonuclease 7 small subunit of Heliobacterium modesticaldum (strain ATCC 51547 / Ice1).